Reading from the N-terminus, the 269-residue chain is Tryptophan synthase alpha chain (269 aa).

Catalysis depends on proton acceptor residues Glu-49 and Asp-60.

The protein belongs to the TrpA family. Tetramer of two alpha and two beta chains.

It catalyses the reaction (1S,2R)-1-C-(indol-3-yl)glycerol 3-phosphate + L-serine = D-glyceraldehyde 3-phosphate + L-tryptophan + H2O. Its pathway is amino-acid biosynthesis; L-tryptophan biosynthesis; L-tryptophan from chorismate: step 5/5. The alpha subunit is responsible for the aldol cleavage of indoleglycerol phosphate to indole and glyceraldehyde 3-phosphate. The polypeptide is Tryptophan synthase alpha chain (Pseudomonas entomophila (strain L48)).